A 281-amino-acid polypeptide reads, in one-letter code: 1-acyl-sn-glycerol-3-phosphate acyltransferase (281 aa).

The next 3 helical transmembrane spans lie at 40–60 (IFVC…IMVL), 71–91 (LGNL…GIPI), and 110–130 (ASPI…VGVA). An HXXXXD motif motif is present at residues 109–114 (HASPID).

It belongs to the 1-acyl-sn-glycerol-3-phosphate acyltransferase family.

It localises to the membrane. The catalysed reaction is a 1-acyl-sn-glycero-3-phosphate + an acyl-CoA = a 1,2-diacyl-sn-glycero-3-phosphate + CoA. It functions in the pathway phospholipid metabolism; CDP-diacylglycerol biosynthesis; CDP-diacylglycerol from sn-glycerol 3-phosphate: step 2/3. Its function is as follows. Converts lysophosphatidic acid (LPA) into phosphatidic acid by incorporating acyl moiety at the 2 position. This enzyme uses erucoyl-CoA as an acyl donor. This Limnanthes alba (White meadowfoam) protein is 1-acyl-sn-glycerol-3-phosphate acyltransferase.